The primary structure comprises 70 residues: Large ribosomal subunit protein bL31 (70 aa).

The Zn(2+) site is built by cysteine 16, cysteine 18, cysteine 36, and cysteine 39.

The protein belongs to the bacterial ribosomal protein bL31 family. Type A subfamily. In terms of assembly, part of the 50S ribosomal subunit. Requires Zn(2+) as cofactor.

Functionally, binds the 23S rRNA. The polypeptide is Large ribosomal subunit protein bL31 (Fervidobacterium nodosum (strain ATCC 35602 / DSM 5306 / Rt17-B1)).